The sequence spans 423 residues: Large ribosomal subunit protein mL37 (423 aa).

The N-terminal 29 residues, 1–29 (MALASGPARRALAGSGQLGLGGFGAPRRG), are a transit peptide targeting the mitochondrion.

It belongs to the mitochondrion-specific ribosomal protein mL37 family. Component of the mitochondrial large ribosomal subunit (mt-LSU). Mature mammalian 55S mitochondrial ribosomes consist of a small (28S) and a large (39S) subunit. The 28S small subunit contains a 12S ribosomal RNA (12S mt-rRNA) and 30 different proteins. The 39S large subunit contains a 16S rRNA (16S mt-rRNA), a copy of mitochondrial valine transfer RNA (mt-tRNA(Val)), which plays an integral structural role, and 52 different proteins. mL37 forms a heterodimer with mL65.

The protein resides in the mitochondrion. This chain is Large ribosomal subunit protein mL37 (MRPL37), found in Homo sapiens (Human).